The chain runs to 111 residues: Gastrula zinc finger protein XlCGF32.1 (111 aa).

C2H2-type zinc fingers lie at residues 6–28 (FDCTECGKSFKRKSKLKTHFLCH), 34–56 (FVCVHCGKGFRDNYKLSLHLRIH), 62–84 (SVCPDCGKSYTDKNKLIVHMRIH), and 89–111 (FMCSECGKGFSDFYNLKSHLQIH).

It belongs to the krueppel C2H2-type zinc-finger protein family.

It is found in the nucleus. Functionally, may be involved in transcriptional regulation. This Xenopus laevis (African clawed frog) protein is Gastrula zinc finger protein XlCGF32.1.